Here is a 1169-residue protein sequence, read N- to C-terminus: Flocculation protein FLO10 (1169 aa).

The signal sequence occupies residues 1 to 24; the sequence is MPVAARYIFLTGLFLLSVANVALG. Residues 111 to 271 enclose the PA14 domain; that stretch reads PVKRGVKLCS…GTEVNDDFEG (161 aa). Asparagine 122, asparagine 157, and asparagine 279 each carry an N-linked (GlcNAc...) asparagine glycan. Repeat copies occupy residues 303–326, 330–356, 357–383, 384–419, 420–446, 447–482, 483–509, 510–545, 546–572, and 573–608. Positions 303–572 are 6 X 27 AA approximate repeats, Ser/Thr-rich; that stretch reads SSWSSSEVCT…TSYVTPYVSS (270 aa). Residues 384 to 608 are 4 X 36 AA approximate repeats, Ser/Thr-rich; that stretch reads STAAANYTSS…TSTSTPYATS (225 aa). Asparagine 389 is a glycosylation site (N-linked (GlcNAc...) asparagine). Asparagine 452 is a glycosylation site (N-linked (GlcNAc...) asparagine). Residue asparagine 515 is glycosylated (N-linked (GlcNAc...) asparagine). 3 N-linked (GlcNAc...) asparagine glycosylation sites follow: asparagine 578, asparagine 656, and asparagine 686. A compositionally biased stretch (low complexity) spans 798–819; that stretch reads TKVSSSESSESHRTSPTTSSES. Disordered regions lie at residues 798 to 837, 856 to 920, and 1070 to 1107; these read TKVS…SSFS, TPSS…SRDR, and RNNN…EAVS. Polar residues predominate over residues 856-884; it reads TPSSPISTVAPRSTGLNSQTESTNSSKET. N-linked (GlcNAc...) asparagine glycosylation is present at asparagine 879. Over residues 886–902 the composition is skewed to low complexity; the sequence is SSENSASVMPSSSATSP. Positions 906-916 are enriched in polar residues; sequence KVTSDETSSGF. Residues 1077–1107 show a composition bias toward low complexity; the sequence is TSGTTSIETHTTTTSNASENSDNVSASEAVS. N-linked (GlcNAc...) asparagine glycans are attached at residues asparagine 1092 and asparagine 1099. Glycine 1146 is lipidated: GPI-anchor amidated glycine. Positions 1147-1169 are cleaved as a propeptide — removed in mature form; the sequence is IANHLLTNSGISIFIASLLLAIV.

It belongs to the flocculin family. Extensively O-glycosylated. In terms of processing, the GPI-anchor is attached to the protein in the endoplasmic reticulum and serves to target the protein to the cell surface. There, the glucosamine-inositol phospholipid moiety is cleaved off and the GPI-modified mannoprotein is covalently attached via its lipidless GPI glycan remnant to the 1,6-beta-glucan of the outer cell wall layer.

The protein localises to the secreted. The protein resides in the cell wall. It localises to the membrane. In terms of biological role, cell wall protein that participates directly in adhesive cell-cell interactions during yeast flocculation, a reversible, asexual and Ca(2+)-dependent process in which cells adhere to form aggregates (flocs) consisting of thousands of cells. The lectin-like protein sticks out of the cell wall of flocculent cells and selectively binds mannose residues in the cell walls of adjacent cells. Activity is inhibited by mannose, glucose, maltose and sucrose. Also involved in cell-substrate adhesion, haploid invasive growth and diploid pseudohyphae formation. This chain is Flocculation protein FLO10 (FLO10), found in Saccharomyces cerevisiae (strain ATCC 204508 / S288c) (Baker's yeast).